Here is a 206-residue protein sequence, read N- to C-terminus: Sortase A (206 aa).

The Cytoplasmic segment spans residues M1–N6. Residues R7 to F24 traverse the membrane as a helical segment. Residues A25–K206 lie on the Extracellular side of the membrane. A disordered region spans residues V49–K69. Ca(2+) is bound by residues E105, E108, D112, and N114. H120 acts as the Proton donor/acceptor in catalysis. E171 is a Ca(2+) binding site. The Acyl-thioester intermediate role is filled by C184.

It belongs to the bacterial sortase family. Class A subfamily. Monomer and homodimer; in equilibrium.

Its subcellular location is the cell membrane. The catalysed reaction is The enzyme catalyzes a cell wall sorting reaction in which a surface protein with a sorting signal containing a LPXTG motif is cleaved between the Thr and Gly residue. The resulting threonine carboxyl end of the protein is covalently attached to a pentaglycine cross-bridge of peptidoglycan.. Sortase activity is regulated by monomer-homodimer equilibrium. Mutant cells with monomeric SrtA display more adhesive proteins on the cell surface and are more invasive than wild-type cells, which have majority of SrtA in dimeric form. Dimerization may suppress the enzymatic activity on cell membranes. Stimulated by calcium ions, which promote substrate binding. Calcium ions bind to SrtA and modulate both the structure and dynamics of a large active site loop. Can also be stimulated, to a lesser extent, by Mg(2+) and Mn(2+). Inhibited by sulfhydryl-modifying reagents. In terms of biological role, transpeptidase that anchors surface proteins to the cell wall. Recognizes and modifies its substrate by proteolytic cleavage of a C-terminal sorting signal. Following cleavage, a covalent intermediate is formed via a thioester bond between the sortase and its substrate, which is then transferred and covalently attached to the cell wall. This sortase recognizes a Leu-Pro-x-Thr-Gly (LPXTG) motif, which is cleaved by the sortase between the threonine and glycine residues. Utilizes lipid II as the peptidoglycan substrate for the sorting reaction. Responsible for the display of important virulence factors. Important for interactions with the host and host colonization during infection. This is Sortase A from Staphylococcus aureus (strain NCTC 8325 / PS 47).